A 427-amino-acid polypeptide reads, in one-letter code: Serine protease HTRA2, mitochondrial (427 aa).

The disordered stretch occupies residues 33–57 (HTASSSKGSGGDNSKDQENNGQNKS). Residues 67-87 (VFQFCVPFSLGALVSAVLIEG) form a helical membrane-spanning segment. Residues 78–81 (ALVS) carry the IAP-binding motif. Residues 144–307 (SNGSGFVIEQ…IPIDYVKVFL (164 aa)) form a serine protease region. Catalysis depends on charge relay system residues histidine 162, aspartate 194, and serine 271. The 86-residue stretch at 330-415 (MGITMLTLTP…DLEIVILRGV (86 aa)) folds into the PDZ domain.

This sequence belongs to the peptidase S1C family. In terms of assembly, interacts with th/DIAP1 (via BIR 2 domain).

The protein resides in the mitochondrion intermembrane space. Its subcellular location is the mitochondrion membrane. The catalysed reaction is Cleavage of non-polar aliphatic amino-acids at the P1 position, with a preference for Val, Ile and Met. At the P2 and P3 positions, Arg is selected most strongly with a secondary preference for other hydrophilic residues.. Its function is as follows. Serine protease that shows proteolytic activity against a non-specific substrate beta-casein. Promotes or induces cell death either by direct binding to and inhibition of BIRC proteins (also called inhibitor of apoptosis proteins, IAPs), leading to an increase in caspase activity, or by a BIRC inhibition-independent, caspase-independent and serine protease activity-dependent mechanism. Can antagonize antiapoptotic activity of th/Diap1 by directly inducing the degradation of th/Diap1. This is Serine protease HTRA2, mitochondrial from Drosophila persimilis (Fruit fly).